The primary structure comprises 447 residues: Pyruvate kinase (447 aa).

Arginine 33 is a substrate binding site. Positions 35, 37, and 61 each coordinate K(+). 35 to 38 (NMSH) is an ATP binding site. Arginine 68 lines the ATP pocket. Mg(2+) is bound at residue glutamate 203. The substrate site is built by glycine 226, aspartate 227, and threonine 259. Aspartate 227 contacts Mg(2+).

The protein belongs to the pyruvate kinase family. As to quaternary structure, homotetramer. It depends on Mg(2+) as a cofactor. Requires K(+) as cofactor.

It carries out the reaction pyruvate + ATP = phosphoenolpyruvate + ADP + H(+). The protein operates within carbohydrate degradation; glycolysis; pyruvate from D-glyceraldehyde 3-phosphate: step 5/5. The sequence is that of Pyruvate kinase from Methanocaldococcus jannaschii (strain ATCC 43067 / DSM 2661 / JAL-1 / JCM 10045 / NBRC 100440) (Methanococcus jannaschii).